The chain runs to 423 residues: Histidine--tRNA ligase (423 aa).

Belongs to the class-II aminoacyl-tRNA synthetase family. Homodimer.

Its subcellular location is the cytoplasm. The enzyme catalyses tRNA(His) + L-histidine + ATP = L-histidyl-tRNA(His) + AMP + diphosphate + H(+). The protein is Histidine--tRNA ligase of Laribacter hongkongensis (strain HLHK9).